The following is a 188-amino-acid chain: CASP-like protein 4B1 (188 aa).

Residues 1-34 (MTNPDNMKPVEATDVESAAEKTSEPTPASGTSTI) form a disordered region. The Cytoplasmic segment spans residues 1–46 (MTNPDNMKPVEATDVESAAEKTSEPTPASGTSTITQRWKREDLIKK). The segment covering 24–34 (EPTPASGTSTI) has biased composition (polar residues). The helical transmembrane segment at 47 to 67 (ASPITRGICLLFSLIAFLIMV) threads the bilayer. Topologically, residues 68–84 (SNKHGYGRNFNDYEEYR) are extracellular. The helical transmembrane segment at 85-105 (YVLAISIISTLYTAWQTFAHF) threads the bilayer. The Cytoplasmic portion of the chain corresponds to 106 to 124 (SKREIFDRRTSILVDFSGD). The chain crosses the membrane as a helical span at residues 125 to 145 (QIVAYLLISAASSAIPLTNIF). The Extracellular segment spans residues 146–156 (REGQDNIFTDS). A helical membrane pass occupies residues 157–177 (AASAISMAIFAFIALALSALF). The Cytoplasmic segment spans residues 178-188 (SGYKLSTHSFI).

Belongs to the Casparian strip membrane proteins (CASP) family. Homodimer and heterodimers.

Its subcellular location is the cell membrane. This Arabidopsis thaliana (Mouse-ear cress) protein is CASP-like protein 4B1.